The following is a 323-amino-acid chain: Serine/threonine-protein phosphatase PP1-gamma catalytic subunit (323 aa).

Asp-64, His-66, Asp-92, and Asn-124 together coordinate Mn(2+). His-125 functions as the Proton donor in the catalytic mechanism. Residues His-173 and His-248 each coordinate Mn(2+). The interval Glu-300–Lys-323 is disordered.

This sequence belongs to the PPP phosphatase family. PP-1 subfamily. PP1 comprises a catalytic subunit, ppp1c1, ppp1cb or ppp1cc, which is folded into its native form by inhibitor 2 and glycogen synthetase kinase 3, and then is complexed to one or several targeting or regulatory subunits. Mn(2+) is required as a cofactor.

Its subcellular location is the cytoplasm. It localises to the nucleus. The protein localises to the cleavage furrow. It is found in the nucleolus. The protein resides in the nucleoplasm. Its subcellular location is the chromosome. It localises to the centromere. The protein localises to the kinetochore. It is found in the nucleus speckle. The protein resides in the midbody. Its subcellular location is the mitochondrion. It localises to the cytoskeleton. The protein localises to the microtubule organizing center. The catalysed reaction is O-phospho-L-seryl-[protein] + H2O = L-seryl-[protein] + phosphate. It carries out the reaction O-phospho-L-threonyl-[protein] + H2O = L-threonyl-[protein] + phosphate. Protein phosphatase 1 (PP1) is essential for cell division, and participates in the regulation of glycogen metabolism, muscle contractility and protein synthesis. Promotes nuclear envelope reassembly by targeting nuclear membrane vesicles to chromatin at the end of mitosis. Acts by dephosphorylating membrane proteins such as lamin B receptor (lbr) to regulate the binding of membrane proteins to chromatin. This chain is Serine/threonine-protein phosphatase PP1-gamma catalytic subunit, found in Xenopus tropicalis (Western clawed frog).